We begin with the raw amino-acid sequence, 694 residues long: Elongation factor G (694 aa).

Residues 6–288 (KLYRNIGIAA…GVIEYLPSPT (283 aa)) form the tr-type G domain. Residues 15–22 (AHVDAGKT), 86–90 (DTPGH), and 140–143 (NKMD) contribute to the GTP site.

Belongs to the TRAFAC class translation factor GTPase superfamily. Classic translation factor GTPase family. EF-G/EF-2 subfamily.

Its subcellular location is the cytoplasm. Catalyzes the GTP-dependent ribosomal translocation step during translation elongation. During this step, the ribosome changes from the pre-translocational (PRE) to the post-translocational (POST) state as the newly formed A-site-bound peptidyl-tRNA and P-site-bound deacylated tRNA move to the P and E sites, respectively. Catalyzes the coordinated movement of the two tRNA molecules, the mRNA and conformational changes in the ribosome. This is Elongation factor G from Legionella pneumophila subsp. pneumophila (strain Philadelphia 1 / ATCC 33152 / DSM 7513).